A 226-amino-acid polypeptide reads, in one-letter code: Probable thiol methyltransferase 2 (226 aa).

S-adenosyl-L-methionine contacts are provided by Trp29, Trp33, Trp40, and Gly67. A Phosphoserine modification is found at Ser79. S-adenosyl-L-methionine contacts are provided by residues Asp88, 116-117, and Tyr132; that span reads DF.

It belongs to the class I-like SAM-binding methyltransferase superfamily. TPMT family.

The enzyme catalyses a thiol + S-adenosyl-L-methionine = a methyl thioether + S-adenosyl-L-homocysteine + H(+). Its function is as follows. S-adenosyl-L-methionine-dependent methyltransferase. The sequence is that of Probable thiol methyltransferase 2 (HOL3) from Arabidopsis thaliana (Mouse-ear cress).